The sequence spans 167 residues: Lipoprotein signal peptidase (167 aa).

4 consecutive transmembrane segments (helical) span residues 8–28 (TFLT…VVLL), 46–66 (WGHF…FGLF), 68–88 (QYKI…ALFL), and 101–121 (IALT…LLHG). Residues aspartate 125 and aspartate 143 contribute to the active site. Residues 139–159 (FNLADAFISIGTLLLIGHLYF) traverse the membrane as a helical segment.

It belongs to the peptidase A8 family.

Its subcellular location is the cell inner membrane. It carries out the reaction Release of signal peptides from bacterial membrane prolipoproteins. Hydrolyzes -Xaa-Yaa-Zaa-|-(S,diacylglyceryl)Cys-, in which Xaa is hydrophobic (preferably Leu), and Yaa (Ala or Ser) and Zaa (Gly or Ala) have small, neutral side chains.. The protein operates within protein modification; lipoprotein biosynthesis (signal peptide cleavage). In terms of biological role, this protein specifically catalyzes the removal of signal peptides from prolipoproteins. This chain is Lipoprotein signal peptidase, found in Chlamydia trachomatis serovar L2b (strain UCH-1/proctitis).